We begin with the raw amino-acid sequence, 130 residues long: Small ribosomal subunit protein uS8 (130 aa).

It belongs to the universal ribosomal protein uS8 family. In terms of assembly, part of the 30S ribosomal subunit.

Functionally, one of the primary rRNA binding proteins, it binds directly to 16S rRNA central domain where it helps coordinate assembly of the platform of the 30S subunit. The protein is Small ribosomal subunit protein uS8 of Thermococcus onnurineus (strain NA1).